Here is a 1353-residue protein sequence, read N- to C-terminus: Xanthine dehydrogenase (1353 aa).

Residues 17–104 (STLIFFVNGK…GSAVTTVEGI (88 aa)) form the 2Fe-2S ferredoxin-type domain. [2Fe-2S] cluster is bound by residues Cys56, Cys61, Cys64, Cys86, Cys126, Cys129, Cys161, and Cys163. The FAD-binding PCMH-type domain occupies 245–434 (YKGERATWYR…VGLYFPKTLE (190 aa)). Residues 273–280 (LVVGNTEI), Phe353, 363–367 (SLGGN), Asp376, Leu424, and Lys442 each bind FAD. Mo-molybdopterin is bound by residues Gln790 and Phe821. Residues Glu825 and Arg903 each coordinate substrate. Arg935 contacts Mo-molybdopterin. Phe937 contributes to the substrate binding site. Ala1102 contributes to the Mo-molybdopterin binding site. The Proton acceptor role is filled by Glu1285.

This sequence belongs to the xanthine dehydrogenase family. In terms of assembly, homodimer. Requires FAD as cofactor. The cofactor is Mo-molybdopterin. [2Fe-2S] cluster is required as a cofactor.

The protein resides in the peroxisome. It catalyses the reaction xanthine + NAD(+) + H2O = urate + NADH + H(+). It carries out the reaction hypoxanthine + NAD(+) + H2O = xanthine + NADH + H(+). Key enzyme in purine degradation. Catalyzes the oxidation of hypoxanthine to xanthine. Catalyzes the oxidation of xanthine to uric acid. The polypeptide is Xanthine dehydrogenase (XDH) (Calliphora vicina (Blue blowfly)).